The sequence spans 123 residues: Defensin beta 118 (123 aa).

An N-terminal signal peptide occupies residues 1-19 (MKLLLLALPILVLLPQVIP). 3 cysteine pairs are disulfide-bonded: Cys27-Cys54, Cys34-Cys48, and Cys38-Cys55. The propeptide occupies 65–123 (LPTTSPTPLSDSTPGIIDNILTIRFTTDYFEISSKKDMVEESEAGQGTQTSPPNVHHTS). Positions 100 to 123 (KDMVEESEAGQGTQTSPPNVHHTS) are disordered. Residues 109 to 123 (GQGTQTSPPNVHHTS) are compositionally biased toward polar residues.

The protein belongs to the beta-defensin family. In terms of processing, the three-dimensional structure formed by the three intramolecular disulfide bridges is indispensable for antimicrobial activity. High-level and epididymis-specific expression. Most abundant in the epithelium of the caput and is also present in the lumen and bound to sperm.

It is found in the secreted. Its function is as follows. Host defense peptide that exhibits antimicrobial activity against both Gram-negative bacteria, such as E.coli and S.typhimurium, and Gram-positive bacteria, such as S.aureus and B.subtilis. Inhibits cell adhesion of E.coli on intestinal epithelial enterocytes. Causes rapid permeabilization of both the outer and inner membrane of E.coli, leading to morphological alterations on the bacterial surface. Binds to bacterial lipopolysaccharides (LPS) with high affinity, and may thereby be involved in immunoregulation through LPS neutralization. May contribute to epididymal innate immunity and protect the sperm against attack by microorganisms. This is Defensin beta 118 (DEFB118) from Macaca mulatta (Rhesus macaque).